Consider the following 424-residue polypeptide: Acetyl-CoA acetyltransferase, mitochondrial (424 aa).

The N-terminal 30 residues, 1–30, are a transit peptide targeting the mitochondrion; that stretch reads MAALVALHGVVRRPLLRGLLQEVRCLERSY. The residue at position 63 (Lys-63) is an N6-acetyllysine; alternate. Lys-63 is subject to N6-succinyllysine; alternate. Lys-75 is subject to N6-succinyllysine. Cys-123 (acyl-thioester intermediate) is an active-site residue. N6-acetyllysine; alternate is present on residues Lys-171, Lys-178, Lys-187, and Lys-199. An N6-succinyllysine; alternate mark is found at Lys-171, Lys-178, Lys-187, and Lys-199. Ser-204 carries the phosphoserine modification. Tyr-216 lines the CoA pocket. Tyr-216 is a K(+) binding site. An N6-acetyllysine; alternate mark is found at Lys-220 and Lys-227. Residues Lys-220 and Lys-227 each carry the N6-succinyllysine; alternate modification. N6-succinyllysine is present on Lys-240. Residue Lys-242 is modified to N6-acetyllysine; alternate. Lys-242 carries the N6-succinyllysine; alternate modification. Residues Lys-248 and Lys-254 each carry the N6-acetyllysine modification. Residues 255–257 and Lys-260 each bind CoA; that span reads RVD. Lys-260 bears the N6-acetyllysine; alternate mark. Position 260 is an N6-succinyllysine; alternate (Lys-260). 2 positions are modified to N6-succinyllysine: Lys-263 and Lys-265. At Lys-270 the chain carries N6-acetyllysine. Positions 277, 278, and 280 each coordinate K(+). Ser-281 is a CoA binding site. Position 335 is an N6-acetyllysine (Lys-335). Position 378 (Val-378) interacts with K(+). Cys-410 acts as the Proton donor/acceptor in catalysis.

Belongs to the thiolase-like superfamily. Thiolase family. In terms of assembly, homotetramer. In terms of processing, succinylation at Lys-265, adjacent to a coenzyme A binding site. Desuccinylated by SIRT5.

It localises to the mitochondrion. The catalysed reaction is 2 acetyl-CoA = acetoacetyl-CoA + CoA. It catalyses the reaction propanoyl-CoA + acetyl-CoA = 2-methyl-3-oxobutanoyl-CoA + CoA. The protein operates within lipid metabolism; fatty acid beta-oxidation. Activated by potassium ions, but not sodium ions. This is one of the enzymes that catalyzes the last step of the mitochondrial beta-oxidation pathway, an aerobic process breaking down fatty acids into acetyl-CoA. Using free coenzyme A/CoA, catalyzes the thiolytic cleavage of medium- to long-chain 3-oxoacyl-CoAs into acetyl-CoA and a fatty acyl-CoA shortened by two carbon atoms. The activity of the enzyme is reversible and it can also catalyze the condensation of two acetyl-CoA molecules into acetoacetyl-CoA. Thereby, it plays a major role in ketone body metabolism. The polypeptide is Acetyl-CoA acetyltransferase, mitochondrial (Acat1) (Mus musculus (Mouse)).